The sequence spans 200 residues: Peptidyl-tRNA hydrolase (200 aa).

Tyr17 lines the tRNA pocket. Catalysis depends on His22, which acts as the Proton acceptor. TRNA is bound by residues Tyr78, Asn80, and Asn126.

Belongs to the PTH family. As to quaternary structure, monomer.

It localises to the cytoplasm. The enzyme catalyses an N-acyl-L-alpha-aminoacyl-tRNA + H2O = an N-acyl-L-amino acid + a tRNA + H(+). Hydrolyzes ribosome-free peptidyl-tRNAs (with 1 or more amino acids incorporated), which drop off the ribosome during protein synthesis, or as a result of ribosome stalling. Its function is as follows. Catalyzes the release of premature peptidyl moieties from peptidyl-tRNA molecules trapped in stalled 50S ribosomal subunits, and thus maintains levels of free tRNAs and 50S ribosomes. The protein is Peptidyl-tRNA hydrolase of Cutibacterium acnes (strain DSM 16379 / KPA171202) (Propionibacterium acnes).